A 302-amino-acid chain; its full sequence is Probable alpha-L-glutamate ligase (302 aa).

The ATP-grasp domain occupies 104–287 (MQLLSRKGIG…IAGMVFEFLE (184 aa)). Residues Lys-141, 178–179 (EF), Asp-187, and 211–213 (RSN) contribute to the ATP site. Mg(2+) contacts are provided by Asp-248, Glu-260, and Asn-262. The Mn(2+) site is built by Asp-248, Glu-260, and Asn-262.

Belongs to the RimK family. The cofactor is Mg(2+). Mn(2+) is required as a cofactor.

This is Probable alpha-L-glutamate ligase from Psychromonas ingrahamii (strain DSM 17664 / CCUG 51855 / 37).